Here is a 494-residue protein sequence, read N- to C-terminus: Lysine--tRNA ligase (494 aa).

Residues glutamate 407 and glutamate 414 each coordinate Mg(2+).

Belongs to the class-II aminoacyl-tRNA synthetase family. In terms of assembly, homodimer. Requires Mg(2+) as cofactor.

Its subcellular location is the cytoplasm. The catalysed reaction is tRNA(Lys) + L-lysine + ATP = L-lysyl-tRNA(Lys) + AMP + diphosphate. In Lactococcus lactis subsp. lactis (strain IL1403) (Streptococcus lactis), this protein is Lysine--tRNA ligase.